Consider the following 560-residue polypeptide: Nitrite reductase (560 aa).

A signal peptide spans 1–26; that stretch reads MSNVGKPILAGLIAGLSLLGLAVAQA. The segment at 27–29 is N-terminal tail; it reads AAP. One can recognise a Cytochrome c domain in the interval 30-126; the sequence is EMTAEEKEAS…ARYIQHTPDI (97 aa). Residues Cys47, Cys50, and His51 each contribute to the heme c site. The tract at residues 61–80 is disordered; it reads KNLEPHWSKTEADGKKTEGG. Basic and acidic residues predominate over residues 63–78; it reads LEPHWSKTEADGKKTE. Positions 97 and 101 each coordinate heme c. The D1-heme domain stretch occupies residues 127 to 560; it reads PPEFSLQDMK…NVFNTMNDVY (434 aa). Heme d1 is bound by residues His193, Arg236, Ser237, Tyr256, Arg382, and Gln500.

Homodimer in solution. Heme c serves as cofactor. It depends on heme as a cofactor.

It localises to the periplasm. The enzyme catalyses nitric oxide + Fe(III)-[cytochrome c] + H2O = Fe(II)-[cytochrome c] + nitrite + 2 H(+). It catalyses the reaction A + NH4(+) + H2O = hydroxylamine + AH2 + H(+). This chain is Nitrite reductase (nirS), found in Stutzerimonas stutzeri (Pseudomonas stutzeri).